Consider the following 1376-residue polypeptide: DNA-directed RNA polymerase subunit beta (1376 aa).

Positions 1357 to 1368 (NSKTGRQTNPGT) are enriched in polar residues. Residues 1357–1376 (NSKTGRQTNPGTRENLPAAE) form a disordered region.

The protein belongs to the RNA polymerase beta chain family. As to quaternary structure, the RNAP catalytic core consists of 2 alpha, 1 beta, 1 beta' and 1 omega subunit. When a sigma factor is associated with the core the holoenzyme is formed, which can initiate transcription.

The catalysed reaction is RNA(n) + a ribonucleoside 5'-triphosphate = RNA(n+1) + diphosphate. DNA-dependent RNA polymerase catalyzes the transcription of DNA into RNA using the four ribonucleoside triphosphates as substrates. The protein is DNA-directed RNA polymerase subunit beta of Azorhizobium caulinodans (strain ATCC 43989 / DSM 5975 / JCM 20966 / LMG 6465 / NBRC 14845 / NCIMB 13405 / ORS 571).